Reading from the N-terminus, the 46-residue chain is L-amino-acid oxidase (46 aa).

N-linked (GlcNAc...) asparagine glycosylation occurs at N31.

This sequence belongs to the flavin monoamine oxidase family. FIG1 subfamily. The cofactor is FAD.

It is found in the secreted. It localises to the lysosome. The protein resides in the cytoplasmic vesicle. Its subcellular location is the secretory vesicle. The protein localises to the acrosome. The catalysed reaction is an L-alpha-amino acid + O2 + H2O = a 2-oxocarboxylate + H2O2 + NH4(+). It catalyses the reaction L-tryptophan + O2 + H2O = indole-3-pyruvate + H2O2 + NH4(+). It carries out the reaction L-phenylalanine + O2 + H2O = 3-phenylpyruvate + H2O2 + NH4(+). The enzyme catalyses L-tyrosine + O2 + H2O = 3-(4-hydroxyphenyl)pyruvate + H2O2 + NH4(+). The catalysed reaction is L-arginine + O2 + H2O = 5-guanidino-2-oxopentanoate + H2O2 + NH4(+). The protein operates within amino-acid degradation; L-tryptophan degradation via pyruvate pathway. Secreted L-amino-acid oxidase that acts as a key immunoregulator. Has preference for L-aromatic amino acids: converts phenylalanine (Phe), tyrosine (Tyr) and tryptophan (Trp) to phenylpyruvic acid (PP), hydroxyphenylpyruvic acid (HPP), and indole-3-pyruvic acid (I3P), respectively. Also has weak L-arginine oxidase activity. Acts as a negative regulator of anti-tumor immunity by mediating Trp degradation via an indole pyruvate pathway that activates the transcription factor AHR. IL4I1-mediated Trp catabolism generates I3P, giving rise to indole metabolites (indole-3-acetic acid (IAA) and indole-3-aldehyde (I3A)) and kynurenic acid, which act as ligands for AHR, a ligand-activated transcription factor that plays important roles in immunity and cancer. AHR activation by indoles following IL4I1-mediated Trp degradation enhances tumor progression by promoting cancer cell motility and suppressing adaptive immunity. Also has an immunoregulatory function in some immune cells, probably by mediating Trp degradation and promoting downstream AHR activation: inhibits T-cell activation and proliferation, promotes the differentiation of naive CD4(+) T-cells into FOXP3(+) regulatory T-cells (Treg) and regulates the development and function of B-cells. Also regulates M2 macrophage polarization by inhibiting T-cell activation. Also has antibacterial properties by inhibiting growth of Gram negative and Gram positive bacteria through the production of NH4(+) and H2O2. In Mus spretus (Western Mediterranean mouse), this protein is L-amino-acid oxidase.